A 605-amino-acid polypeptide reads, in one-letter code: Zinc metalloproteinase nas-34 (605 aa).

Residues 1–19 (MVSYWPVLIVLCLLPICHA) form the signal peptide. Residues 20 to 124 (KSYFADFVNG…EFLYAIRGKR (105 aa)) constitute a propeptide that is removed on maturation. Residues 124-322 (RSMTSFLSER…VKRINFAYCN (199 aa)) form the Peptidase M12A domain. 2 disulfide bridges follow: cysteine 165/cysteine 321 and cysteine 191/cysteine 211. Histidine 219 is a binding site for Zn(2+). Residue glutamate 220 is part of the active site. Zn(2+) is bound by residues histidine 223 and histidine 229. The 41-residue stretch at 317-357 (NFAYCNSTCSNYLDCQNGGYINPNDCNNCKCPPGFGGQLCD) folds into the EGF-like domain. Asparagine 322 carries an N-linked (GlcNAc...) asparagine glycan. Cystine bridges form between cysteine 325/cysteine 345, cysteine 347/cysteine 356, cysteine 366/cysteine 388, and cysteine 415/cysteine 436. The 104-residue stretch at 366 to 469 (CGAGDITATS…ARFSLNYRYD (104 aa)) folds into the CUB domain. Residues 479-526 (TTTSTTTTTAPITVPTVSPTTTTTRQTTTTARTSTTTTTTQAPPTTTT) are disordered. Positions 525–566 (TTSTSQCASWSACSAQCGGCGTQSRRCGTYVETVYCNTNPCT) constitute a TSP type-1 domain. Disulfide bonds link cysteine 531–cysteine 551, cysteine 537–cysteine 560, and cysteine 541–cysteine 565.

The cofactor is Zn(2+). Expressed in hypodermal cells. First expressed in the dorsal and lateral surface area of the middle and posterior region of embryos. At later stages, it localizes to lateral surface regions, probably corresponding to hypodermal seam cells. In L1 larvae, it is expressed in seam cells and in a few cells anterior to the nerve ring.

The protein resides in the secreted. Metalloprotease. Required for normal hatching and migration of neuroblasts. May act by degrading eggshell proteins at hatching. The sequence is that of Zinc metalloproteinase nas-34 (hch-1) from Caenorhabditis elegans.